Consider the following 240-residue polypeptide: Cysteine-rich venom protein (240 aa).

Positions 1 to 19 (MIAFIVLPILAAVLQQSSG) are cleaved as a signal peptide. Residues 39-166 (DLHNSLRRSV…EYSYFYVCQY (128 aa)) enclose the SCP domain. 8 cysteine pairs are disulfide-bonded: Cys75/Cys153, Cys92/Cys167, Cys148/Cys164, Cys186/Cys193, Cys189/Cys198, Cys202/Cys235, Cys211/Cys229, and Cys220/Cys233. The ShKT domain occupies 202–235 (CRQENKFTNCDSLVRQSSCQDNYMKTNCPASCFC).

The protein belongs to the CRISP family. As to expression, expressed by the venom gland.

It localises to the secreted. Functionally, blocks contraction of smooth muscle elicited by high potassium-induced depolarization, but does not block caffeine-stimulated contraction. May target voltage-gated calcium channels on smooth muscle. The polypeptide is Cysteine-rich venom protein (Protobothrops jerdonii (Jerdon's pitviper)).